A 227-amino-acid polypeptide reads, in one-letter code: Isopentenyl-diphosphate Delta-isomerase 1 (227 aa).

A substrate-binding site is contributed by Lys-36. Residues His-40 and His-51 each contribute to the Mg(2+) site. Positions 49–199 (LLHRAFSVFL…EIKITPWFQI (151 aa)) constitute a Nudix hydrolase domain. The substrate site is built by Arg-70 and Lys-74. Cys-86 acts as the Proton acceptor in catalysis. Ser-87 is a substrate binding site. Mg(2+) is bound by residues Glu-146 and Glu-148. Glu-148 is a catalytic residue. Lys-176 is subject to N6-acetyllysine.

It belongs to the IPP isomerase type 1 family. As to quaternary structure, monomer. It depends on Mg(2+) as a cofactor.

Its subcellular location is the peroxisome. It carries out the reaction isopentenyl diphosphate = dimethylallyl diphosphate. Its pathway is isoprenoid biosynthesis; dimethylallyl diphosphate biosynthesis; dimethylallyl diphosphate from isopentenyl diphosphate: step 1/1. Catalyzes the 1,3-allylic rearrangement of the homoallylic substrate isopentenyl (IPP) to its highly electrophilic allylic isomer, dimethylallyl diphosphate (DMAPP). This Bos taurus (Bovine) protein is Isopentenyl-diphosphate Delta-isomerase 1 (IDI1).